The primary structure comprises 212 residues: ATP-dependent Clp protease proteolytic subunit 2 (212 aa).

The interval 1–20 (MSHNTSIASQGMPAMAGPET) is disordered. The active-site Nucleophile is serine 107. Residue histidine 132 is part of the active site.

This sequence belongs to the peptidase S14 family. In terms of assembly, fourteen ClpP subunits assemble into 2 heptameric rings which stack back to back to give a disk-like structure with a central cavity, resembling the structure of eukaryotic proteasomes.

Its subcellular location is the cytoplasm. It carries out the reaction Hydrolysis of proteins to small peptides in the presence of ATP and magnesium. alpha-casein is the usual test substrate. In the absence of ATP, only oligopeptides shorter than five residues are hydrolyzed (such as succinyl-Leu-Tyr-|-NHMec, and Leu-Tyr-Leu-|-Tyr-Trp, in which cleavage of the -Tyr-|-Leu- and -Tyr-|-Trp bonds also occurs).. Its function is as follows. Cleaves peptides in various proteins in a process that requires ATP hydrolysis. Has a chymotrypsin-like activity. Plays a major role in the degradation of misfolded proteins. The sequence is that of ATP-dependent Clp protease proteolytic subunit 2 from Cutibacterium acnes (strain DSM 16379 / KPA171202) (Propionibacterium acnes).